The following is a 127-amino-acid chain: Putative B3 domain-containing protein At4g12617 (127 aa).

A DNA-binding region (TF-B3) is located at residues Ile-35–Ala-127.

It localises to the nucleus. This Arabidopsis thaliana (Mouse-ear cress) protein is Putative B3 domain-containing protein At4g12617.